A 787-amino-acid chain; its full sequence is LPS-assembly protein LptD (787 aa).

Residues M1–A39 form the signal peptide.

This sequence belongs to the LptD family. As to quaternary structure, component of the lipopolysaccharide transport and assembly complex. Interacts with LptE and LptA.

The protein localises to the cell outer membrane. Its function is as follows. Together with LptE, is involved in the assembly of lipopolysaccharide (LPS) at the surface of the outer membrane. This Burkholderia thailandensis (strain ATCC 700388 / DSM 13276 / CCUG 48851 / CIP 106301 / E264) protein is LPS-assembly protein LptD.